A 287-amino-acid polypeptide reads, in one-letter code: uncharacterized protein (287 aa).

The next 10 membrane-spanning stretches (helical) occupy residues 7–28 (LLLT…RAAL), 32–54 (AIDA…AVLL), 67–86 (GWRG…YAYV), 91–113 (GTGA…LLRG), 120–139 (ALLG…LPGA), 144–163 (LGGA…YTLL), 170–192 (PLAV…LLAF), 202–224 (GLAY…WYSA), 231–253 (IQGA…LLLG), and 263–280 (ATLA…PRLG). EamA domains lie at 15–136 (LAFA…FLLL) and 155–276 (LAWG…LILA).

It is found in the cell membrane. This is an uncharacterized protein from Pseudomonas aeruginosa (strain ATCC 15692 / DSM 22644 / CIP 104116 / JCM 14847 / LMG 12228 / 1C / PRS 101 / PAO1).